The chain runs to 261 residues: Methyl-coenzyme M reductase subunit gamma (261 aa).

Arg-123 serves as a coordination point for coenzyme M.

It belongs to the methyl-coenzyme M reductase gamma subunit family. As to quaternary structure, MCR is a hexamer of two alpha, two beta, and two gamma chains, forming a dimer of heterotrimers. Requires coenzyme F430 as cofactor.

The protein localises to the cytoplasm. The catalysed reaction is coenzyme B + methyl-coenzyme M = methane + coenzyme M-coenzyme B heterodisulfide. Its pathway is one-carbon metabolism; methyl-coenzyme M reduction; methane from methyl-coenzyme M: step 1/1. Functionally, component of the methyl-coenzyme M reductase (MCR) I that catalyzes the reductive cleavage of methyl-coenzyme M (CoM-S-CH3 or 2-(methylthio)ethanesulfonate) using coenzyme B (CoB or 7-mercaptoheptanoylthreonine phosphate) as reductant which results in the production of methane and the mixed heterodisulfide of CoB and CoM (CoM-S-S-CoB). This is the final step in methanogenesis. The protein is Methyl-coenzyme M reductase subunit gamma (mcrG) of Methanococcus voltae.